The chain runs to 503 residues: Aspartyl/glutamyl-tRNA(Asn/Gln) amidotransferase subunit B (503 aa).

This sequence belongs to the GatB/GatE family. GatB subfamily. In terms of assembly, heterotrimer of A, B and C subunits.

It carries out the reaction L-glutamyl-tRNA(Gln) + L-glutamine + ATP + H2O = L-glutaminyl-tRNA(Gln) + L-glutamate + ADP + phosphate + H(+). It catalyses the reaction L-aspartyl-tRNA(Asn) + L-glutamine + ATP + H2O = L-asparaginyl-tRNA(Asn) + L-glutamate + ADP + phosphate + 2 H(+). In terms of biological role, allows the formation of correctly charged Asn-tRNA(Asn) or Gln-tRNA(Gln) through the transamidation of misacylated Asp-tRNA(Asn) or Glu-tRNA(Gln) in organisms which lack either or both of asparaginyl-tRNA or glutaminyl-tRNA synthetases. The reaction takes place in the presence of glutamine and ATP through an activated phospho-Asp-tRNA(Asn) or phospho-Glu-tRNA(Gln). In Rhodococcus erythropolis (strain PR4 / NBRC 100887), this protein is Aspartyl/glutamyl-tRNA(Asn/Gln) amidotransferase subunit B.